The sequence spans 276 residues: TIMELESS-interacting protein (276 aa).

A disordered region spans residues 1–54; sequence MLEQEENGLFEIPDYEHVEDETFPPFPPPGSPERDPAEAEPDEGSGAPVPVPPK. Positions 64–140 are interaction with TIMELESS; the sequence is LDATRLTSER…KEVQTCLKRI (77 aa). Residues 217-243 are compositionally biased toward polar residues; sequence SNSQSLENDVTVEESSTGENQEESNGL. The interval 217–276 is disordered; the sequence is SNSQSLENDVTVEESSTGENQEESNGLISADGPHDVPSASTQEEGQLEAEETQLDHPNLD. S219 bears the Phosphoserine mark. Position 233 is a phosphothreonine (T233).

The protein belongs to the CSM3 family. Interacts with TIMELESS, which impairs TIMELESS self-association (via N-terminus). Associates with the MCM2-7 complex. Interacts with RPA2, PRDX2.

Its subcellular location is the cytoplasm. The protein resides in the nucleus. In terms of biological role, plays an important role in the control of DNA replication and the maintenance of replication fork stability. Important for cell survival after DNA damage or replication stress. May be specifically required for the ATR-CHEK1 pathway in the replication checkpoint induced by hydroxyurea or ultraviolet light. Forms a complex with TIMELESS and this complex regulates DNA replication processes under both normal and stress conditions, stabilizes replication forks and influences both CHEK1 phosphorylation and the intra-S phase checkpoint in response to genotoxic stress. The polypeptide is TIMELESS-interacting protein (Tipin) (Rattus norvegicus (Rat)).